The primary structure comprises 92 residues: Small ribosomal subunit protein uS19c (92 aa).

This sequence belongs to the universal ribosomal protein uS19 family.

Its subcellular location is the plastid. It localises to the chloroplast. In terms of biological role, protein S19 forms a complex with S13 that binds strongly to the 16S ribosomal RNA. In Nephroselmis olivacea (Green alga), this protein is Small ribosomal subunit protein uS19c.